A 382-amino-acid polypeptide reads, in one-letter code: Hyaluronidase (382 aa).

The segment at residues 1-28 (MSRPLVITEGMMIGVLLMLAPINALLLG) is a signal peptide (or 24). A propeptide spanning residues 29–33 (FVQST) is cleaved from the precursor. 2 disulfides stabilise this stretch: Cys54–Cys345 and Cys221–Cys233. N-linked (GlcNAc...) asparagine glycosylation is present at Asn115. Glu145 functions as the Proton donor in the catalytic mechanism. Asn263 carries an N-linked (GlcNAc...) (complex) asparagine glycan.

It belongs to the glycosyl hydrolase 56 family. Homotetramer. Post-translationally, N-glycosylated. Glycans found include a majority of small oligosaccharides (Man1-3GlcNAc2), most of which are either alpha 1,3-monofucosylated or alpha 1,3-(alpha 1,6-)difucosylated at the innermost GlcNAc residue, approximately 5% of high-mannose type structures, and 8% contains the terminal trisaccharide GalNAc beta 1-4[Fuc alpha 1-3]GlcNAc beta 1-in beta 1,2-linkage to the core alpha 1,3-mannosyl residue. In terms of tissue distribution, expressed in the venom glands of worker bees. It is also detected in the testes of drones but not in the queen-bee venom glands or in pupae.

Its subcellular location is the secreted. The enzyme catalyses Random hydrolysis of (1-&gt;4)-linkages between N-acetyl-beta-D-glucosamine and D-glucuronate residues in hyaluronate.. Its function is as follows. Hydrolyzes high molecular weight hyaluronic acid to produce small oligosaccharides. In Apis mellifera (Honeybee), this protein is Hyaluronidase.